A 657-amino-acid polypeptide reads, in one-letter code: Receptor-type tyrosine-protein phosphatase R (657 aa).

Residues 1–21 form the signal peptide; the sequence is MRRAVCFPALCLLLNLHAAGC. Residues 22–227 lie on the Extracellular side of the membrane; that stretch reads FSGNNDHFLA…EADKIWSKEG (206 aa). Serine 23 carries O-linked (Xyl...) (chondroitin sulfate) serine glycosylation. The N-linked (GlcNAc...) asparagine glycan is linked to asparagine 129. A helical transmembrane segment spans residues 228–248; that stretch reads FYAVVIFLSIFVIIVTCLMIL. The Cytoplasmic portion of the chain corresponds to 249 to 657; it reads YRLKERFQLS…ESRLSAETVQ (409 aa). Serine 272 carries the phosphoserine modification. Residue serine 339 is modified to Phosphoserine; by PKA. One can recognise a Tyrosine-protein phosphatase domain in the interval 393–647; sequence LQSEFMEIPM…EFVHHALCLY (255 aa). Substrate contacts are provided by residues aspartate 554, 588–594, and glutamine 632; that span reads CSAGIGR. The Phosphocysteine intermediate role is filled by cysteine 588.

The protein belongs to the protein-tyrosine phosphatase family. Receptor class 7 subfamily. Interacts with MAPKs. As to expression, detected in cerebrospinal fluid (at protein level). Expressed in brain, placenta, small intestine, stomach, uterus and weakly in the prostate. Isoform alpha has been observed only in the brain. Isoform gamma is expressed in brain, placenta and uterus. Isoform delta is expressed in brain, kidney, placenta, prostate, small intestine and uterus.

The protein localises to the secreted. It localises to the cell membrane. Its subcellular location is the cytoplasm. The protein resides in the perinuclear region. It catalyses the reaction O-phospho-L-tyrosyl-[protein] + H2O = L-tyrosyl-[protein] + phosphate. Functionally, sequesters mitogen-activated protein kinases (MAPKs) such as MAPK1, MAPK3 and MAPK14 in the cytoplasm in an inactive form. The MAPKs bind to a dephosphorylated kinase interacting motif, phosphorylation of which by the protein kinase A complex releases the MAPKs for activation and translocation into the nucleus. This chain is Receptor-type tyrosine-protein phosphatase R (PTPRR), found in Homo sapiens (Human).